The following is a 97-amino-acid chain: MRTLSLLLALLFLAAQTLAQPIDEGAEEVITEEPEITETQDPTTIMLIERGIGGDSTDATRSTITCYCRSRCRMLEKNSGTCRSSNCTYTLCCKKTS.

An N-terminal signal peptide occupies residues 1–19; it reads MRTLSLLLALLFLAAQTLA. The propeptide occupies 20–61; it reads QPIDEGAEEVITEEPEITETQDPTTIMLIERGIGGDSTDATR. Cystine bridges form between Cys-66/Cys-93, Cys-68/Cys-82, and Cys-72/Cys-92. A propeptide spanning residues 96-97 is cleaved from the precursor; it reads TS.

This sequence belongs to the alpha-defensin family. Highly expressed in intestine, expressed at lower levels in spleen, and at very low levels in kidney and lung.

The protein resides in the secreted. Has antimicrobial activity. This Ornithorhynchus anatinus (Duckbill platypus) protein is Defensin-A2.